We begin with the raw amino-acid sequence, 371 residues long: Cytochrome b (371 aa).

4 helical membrane passes run 24–44, 68–89, 104–124, and 169–189; these read FGSM…FLAL, WTMQ…YIHI, WLSG…GYVL, and FFAL…VHIV. Positions 74 and 88 each coordinate heme b. Heme b contacts are provided by H173 and H187. H192 contributes to the a ubiquinone binding site. 4 consecutive transmembrane segments (helical) span residues 217–237, 279–299, 311–331, and 338–357; these read YKDT…MSFA, LGGT…PFTH, LSQL…WTAT, and FITI…MTNP.

It belongs to the cytochrome b family. As to quaternary structure, the cytochrome bc1 complex contains 3 respiratory subunits (MT-CYB, CYC1 and UQCRFS1), 2 core proteins (UQCRC1 and UQCRC2) and probably 6 low-molecular weight proteins. Heme b serves as cofactor.

Its subcellular location is the mitochondrion inner membrane. Its function is as follows. Component of the ubiquinol-cytochrome c reductase complex (complex III or cytochrome b-c1 complex) that is part of the mitochondrial respiratory chain. The b-c1 complex mediates electron transfer from ubiquinol to cytochrome c. Contributes to the generation of a proton gradient across the mitochondrial membrane that is then used for ATP synthesis. The sequence is that of Cytochrome b (MT-CYB) from Homoroselaps lacteus (Spotted harlequin snake).